Reading from the N-terminus, the 355-residue chain is Serum paraoxonase/arylesterase 1 (355 aa).

A disulfide bond links Cys-42 and Cys-353. Positions 53 and 54 each coordinate Ca(2+). The active-site Proton acceptor is the His-115. The Ca(2+) site is built by Ile-117, Asn-168, Asp-169, and Asn-224. Asn-253 carries N-linked (GlcNAc...) asparagine glycosylation. 2 residues coordinate Ca(2+): Asp-269 and Asn-270. 2 N-linked (GlcNAc...) asparagine glycosylation sites follow: Asn-270 and Asn-324.

The protein belongs to the paraoxonase family. As to quaternary structure, homodimer. Interacts with CLU. It depends on Ca(2+) as a cofactor. Glycosylated. In terms of processing, the signal sequence is not cleaved. In terms of tissue distribution, plasma. Associated with HDL.

The protein resides in the secreted. The protein localises to the extracellular space. The enzyme catalyses a phenyl acetate + H2O = a phenol + acetate + H(+). It catalyses the reaction An aryl dialkyl phosphate + H2O = dialkyl phosphate + an aryl alcohol.. It carries out the reaction an N-acyl-L-homoserine lactone + H2O = an N-acyl-L-homoserine + H(+). Hydrolyzes the toxic metabolites of a variety of organophosphorus insecticides. Capable of hydrolyzing a broad spectrum of organophosphate substrates and lactones, and a number of aromatic carboxylic acid esters. Mediates an enzymatic protection of low density lipoproteins against oxidative modification. In Rattus norvegicus (Rat), this protein is Serum paraoxonase/arylesterase 1 (Pon1).